We begin with the raw amino-acid sequence, 156 residues long: Ribosomal RNA large subunit methyltransferase H (156 aa).

Residues L73, G104, and 123-128 each bind S-adenosyl-L-methionine; that span reads LSPLTL.

It belongs to the RNA methyltransferase RlmH family. Homodimer.

It localises to the cytoplasm. The enzyme catalyses pseudouridine(1915) in 23S rRNA + S-adenosyl-L-methionine = N(3)-methylpseudouridine(1915) in 23S rRNA + S-adenosyl-L-homocysteine + H(+). Specifically methylates the pseudouridine at position 1915 (m3Psi1915) in 23S rRNA. The sequence is that of Ribosomal RNA large subunit methyltransferase H from Yersinia enterocolitica serotype O:8 / biotype 1B (strain NCTC 13174 / 8081).